A 194-amino-acid polypeptide reads, in one-letter code: Orotate phosphoribosyltransferase (194 aa).

Residues R102, K103, K106, H108, and 129 to 137 (EDVVTTGGS) contribute to the 5-phospho-alpha-D-ribose 1-diphosphate site. Positions 133 and 161 each coordinate orotate.

This sequence belongs to the purine/pyrimidine phosphoribosyltransferase family. PyrE subfamily. Homodimer. It depends on Mg(2+) as a cofactor.

The catalysed reaction is orotidine 5'-phosphate + diphosphate = orotate + 5-phospho-alpha-D-ribose 1-diphosphate. It functions in the pathway pyrimidine metabolism; UMP biosynthesis via de novo pathway; UMP from orotate: step 1/2. In terms of biological role, catalyzes the transfer of a ribosyl phosphate group from 5-phosphoribose 1-diphosphate to orotate, leading to the formation of orotidine monophosphate (OMP). The polypeptide is Orotate phosphoribosyltransferase (Prochlorococcus marinus (strain MIT 9211)).